The primary structure comprises 886 residues: cytokinesis protein 3 (886 aa).

Residues 6-67 (QLPCMVRALY…PSNFVHCLDI (62 aa)) form the SH3 domain. Residues 72–88 (PGSSMSRTSASSFRYSS) are compositionally biased toward low complexity. The segment at 72-189 (PGSSMSRTSA…DLSRSTPSPL (118 aa)) is disordered. Residues 89 to 104 (PQKSSIDTPITSSDQG) show a composition bias toward polar residues. Over residues 135 to 154 (LNSLGSSLSLKKSVSRPPSS) the composition is skewed to low complexity. Residues 155–188 (MSRTNLDVSSRWDNTADNDSQIDAQDLSRSTPSP) show a composition bias toward polar residues. A Phosphoserine modification is found at Ser-213. Disordered stretches follow at residues 219-290 (TKST…SPSD) and 358-393 (RRGS…SPHT). The span at 253–264 (DNSSKPRTSLQP) shows a compositional bias: polar residues.

This sequence belongs to the CYK3 family.

The protein localises to the cell tip. Functionally, involved in cytokinesis. This is cytokinesis protein 3 (cyk3) from Schizosaccharomyces pombe (strain 972 / ATCC 24843) (Fission yeast).